Consider the following 273-residue polypeptide: 3-methyl-2-oxobutanoate hydroxymethyltransferase (273 aa).

The Mg(2+) site is built by Asp53 and Asp92. 3-methyl-2-oxobutanoate contacts are provided by residues 53-54 (DS), Asp92, and Lys122. A Mg(2+)-binding site is contributed by Glu124. Glu191 functions as the Proton acceptor in the catalytic mechanism.

The protein belongs to the PanB family. As to quaternary structure, homodecamer; pentamer of dimers. Mg(2+) is required as a cofactor.

It localises to the cytoplasm. The enzyme catalyses 3-methyl-2-oxobutanoate + (6R)-5,10-methylene-5,6,7,8-tetrahydrofolate + H2O = 2-dehydropantoate + (6S)-5,6,7,8-tetrahydrofolate. Its pathway is cofactor biosynthesis; (R)-pantothenate biosynthesis; (R)-pantoate from 3-methyl-2-oxobutanoate: step 1/2. Functionally, catalyzes the reversible reaction in which hydroxymethyl group from 5,10-methylenetetrahydrofolate is transferred onto alpha-ketoisovalerate to form ketopantoate. The chain is 3-methyl-2-oxobutanoate hydroxymethyltransferase from Phocaeicola vulgatus (strain ATCC 8482 / DSM 1447 / JCM 5826 / CCUG 4940 / NBRC 14291 / NCTC 11154) (Bacteroides vulgatus).